Reading from the N-terminus, the 331-residue chain is uncharacterized protein (331 aa).

This sequence belongs to the proline racemase family.

This is an uncharacterized protein from Bacillus anthracis.